The primary structure comprises 305 residues: Aquaporin-1 (305 aa).

The disordered stretch occupies residues 1–34; sequence MSSNDSNDTDKQHTRLDPTGVDDAYIPPEQPETK. Over 1–48 the chain is Cytoplasmic; sequence MSSNDSNDTDKQHTRLDPTGVDDAYIPPEQPETKHHRFKISKDTLRNH. Residues 49 to 69 form a helical membrane-spanning segment; it reads FIAAAGEFCGTFMFLWCAYVI. The Extracellular segment spans residues 70-91; sequence CNVANHDVALVAAPDGSHPGQL. Residues 92-112 traverse the membrane as a helical segment; the sequence is IMIAIGFGFSVMFSIWCFAGV. Residues 113 to 136 are Cytoplasmic-facing; that stretch reads SGGALNPAMSLSLCLARAVSPTRC. An NPA 1 motif is present at residues 118–120; that stretch reads NPA. A helical membrane pass occupies residues 137 to 157; sequence VVMWVSQIVAGMAAGGAASAM. The Extracellular portion of the chain corresponds to 158–176; that stretch reads TPGEVLFANSLGLGCSRTR. The chain crosses the membrane as a helical span at residues 177–197; the sequence is GLFLEMFGTAILCLTVLMTAV. Topologically, residues 198–203 are cytoplasmic; it reads EKRETN. The helical transmembrane segment at 204 to 224 threads the bilayer; the sequence is FMAALPIGISLFIAHVALTAY. Residues 225–248 lie on the Extracellular side of the membrane; the sequence is TGTGVNPARSLGAAVAARYFPHYH. The NPA 2 motif lies at 230–232; it reads NPA. A helical transmembrane segment spans residues 249-269; the sequence is WIYWIGTLLGSILAWSVWQLL. Residues 270–305 lie on the Cytoplasmic side of the membrane; that stretch reads QILDYTTYVTAEKAASTKEKAQKKGETSSSSAVAEV. Over residues 286–295 the composition is skewed to basic and acidic residues; sequence TKEKAQKKGE. The interval 286-305 is disordered; the sequence is TKEKAQKKGETSSSSAVAEV. Polar residues predominate over residues 296–305; it reads TSSSSAVAEV.

This sequence belongs to the MIP/aquaporin (TC 1.A.8) family.

It is found in the endoplasmic reticulum membrane. The protein localises to the cell membrane. Water channel required to facilitate the transport of water across membranes. Involved in sporulation, freeze tolerance and osmotolerance. Is non-functional in most laboratory strains. This chain is Aquaporin-1 (AQY1), found in Saccharomyces cerevisiae (strain YJM789) (Baker's yeast).